The following is a 251-amino-acid chain: Thiamine thiazole synthase (251 aa).

NAD(+) is bound by residues serine 34, 53-54 (EK), glycine 61, valine 125, and 151-153 (HVD). Residues aspartate 153 and histidine 168 each coordinate Fe cation. An NAD(+)-binding site is contributed by methionine 216. Position 226 (arginine 226) interacts with glycine.

The protein belongs to the THI4 family. As to quaternary structure, homooctamer; tetramer of dimers. Requires Fe(2+) as cofactor.

It carries out the reaction hydrogen sulfide + glycine + NAD(+) = ADP-5-ethyl-4-methylthiazole-2-carboxylate + nicotinamide + 3 H2O + H(+). Its pathway is cofactor biosynthesis; thiamine diphosphate biosynthesis. Functionally, involved in the biosynthesis of the thiazole moiety of thiamine. Catalyzes the conversion of NAD and glycine to adenosine diphosphate 5-(2-hydroxyethyl)-4-methylthiazole-2-carboxylate (ADT), an adenylated thiazole intermediate, using free sulfide as a source of sulfur. The protein is Thiamine thiazole synthase of Thermococcus kodakarensis (strain ATCC BAA-918 / JCM 12380 / KOD1) (Pyrococcus kodakaraensis (strain KOD1)).